Here is a 277-residue protein sequence, read N- to C-terminus: Urease accessory protein UreD (277 aa).

The tract at residues 1–20 (MRQTAQEDASPAPMQRAHGT) is disordered.

It belongs to the UreD family. UreD, UreF and UreG form a complex that acts as a GTP-hydrolysis-dependent molecular chaperone, activating the urease apoprotein by helping to assemble the nickel containing metallocenter of UreC. The UreE protein probably delivers the nickel.

Its subcellular location is the cytoplasm. Required for maturation of urease via the functional incorporation of the urease nickel metallocenter. The chain is Urease accessory protein UreD from Chelativorans sp. (strain BNC1).